Reading from the N-terminus, the 557-residue chain is Polypyrimidine tract-binding protein 1 (557 aa).

N-acetylmethionine is present on Met-1. Ser-16 bears the Phosphoserine mark. RRM domains lie at 59–143 (RVIH…SSPN), 184–260 (LRII…FSKL), and 363–437 (SVLL…LSKH). Residue Lys-65 forms a Glycyl lysine isopeptide (Lys-Gly) (interchain with G-Cter in SUMO2) linkage. Tyr-127 is modified (phosphotyrosine). Thr-138 carries the phosphothreonine modification. A Phosphoserine modification is found at Ser-141. A Glycyl lysine isopeptide (Lys-Gly) (interchain with G-Cter in SUMO2) cross-link involves residue Lys-218. A Phosphoserine modification is found at Ser-459. The RRM 4 domain occupies 480-555 (ATLHLSNIPP…HHLRVSFSKS (76 aa)).

In terms of assembly, monomer. Part of a ternary complex containing KHSRP, PTBP1, PTBP2 and HNRPH1. Interacts with RAVER1 and SFPQ.

Its subcellular location is the nucleus. Plays a role in pre-mRNA splicing and in the regulation of alternative splicing events. Activates exon skipping of its own pre-mRNA during muscle cell differentiation. Binds to the polypyrimidine tract of introns. May promote RNA looping when bound to two separate polypyrimidine tracts in the same pre-mRNA. May promote the binding of U2 snRNP to pre-mRNA. Cooperates with RAVER1 to modulate switching between mutually exclusive exons during maturation of the TPM1 pre-mRNA. Represses the splicing of MAPT/Tau exon 10. Binds to polypyrimidine-rich controlling element (PCE) of CFTR and promotes exon skipping of CFTR exon 9, thereby antagonizing TIA1 and its role in exon inclusion of CFTR exon 9. Plays a role in the splicing of pyruvate kinase PKM by binding repressively to a polypyrimidine tract flanking PKM exon 9, inhibiting exon 9 inclusion and resulting in exon 10 inclusion and production of the PKM M2 isoform. The chain is Polypyrimidine tract-binding protein 1 (PTBP1) from Sus scrofa (Pig).